The primary structure comprises 232 residues: Aspartate/glutamate leucyltransferase (232 aa).

The protein belongs to the R-transferase family. Bpt subfamily.

It localises to the cytoplasm. The enzyme catalyses N-terminal L-glutamyl-[protein] + L-leucyl-tRNA(Leu) = N-terminal L-leucyl-L-glutamyl-[protein] + tRNA(Leu) + H(+). It catalyses the reaction N-terminal L-aspartyl-[protein] + L-leucyl-tRNA(Leu) = N-terminal L-leucyl-L-aspartyl-[protein] + tRNA(Leu) + H(+). Functionally, functions in the N-end rule pathway of protein degradation where it conjugates Leu from its aminoacyl-tRNA to the N-termini of proteins containing an N-terminal aspartate or glutamate. The sequence is that of Aspartate/glutamate leucyltransferase from Vibrio vulnificus (strain CMCP6).